The sequence spans 292 residues: Troponin I (292 aa).

Ser-1 bears the N-acetylserine mark. The disordered stretch occupies residues 1-149 (SSLEERRAAR…GLGGLSPEKK (149 aa)). Low complexity predominate over residues 46 to 55 (YSAPAEPAYD). Positions 58–134 (AENRRRQQQE…EARRMAEEQK (77 aa)) are enriched in basic and acidic residues. The actin-binding stretch occupies residues 237 to 250 (DTKGKFVKPVLRKV). The tract at residues 255–292 (SKLDKIQRKEAKKSDFRDNLKSSREHEADKEGGEGENE) is disordered.

Belongs to the troponin I family.

Its function is as follows. Troponin I is the inhibitory subunit of troponin, the thin filament regulatory complex which confers calcium-sensitivity to striated muscle actomyosin ATPase activity. The protein is Troponin I of Chlamys nipponensis akazara (Akazara scallop).